The sequence spans 296 residues: Enoyl-CoA hydratase domain-containing protein 2, mitochondrial (296 aa).

A mitochondrion-targeting transit peptide spans 1 to 17 (MLRVLPRALRLPCSWRF). N6-acetyllysine; alternate is present on Lys101. Lys101 carries the post-translational modification N6-succinyllysine; alternate.

Belongs to the enoyl-CoA hydratase/isomerase family.

The protein resides in the mitochondrion. In Mus musculus (Mouse), this protein is Enoyl-CoA hydratase domain-containing protein 2, mitochondrial (Echdc2).